The primary structure comprises 359 residues: Peptide chain release factor 1 (359 aa).

Gln-233 is modified (N5-methylglutamine).

The protein belongs to the prokaryotic/mitochondrial release factor family. In terms of processing, methylated by PrmC. Methylation increases the termination efficiency of RF1.

It localises to the cytoplasm. Functionally, peptide chain release factor 1 directs the termination of translation in response to the peptide chain termination codons UAG and UAA. The protein is Peptide chain release factor 1 of Ruminiclostridium cellulolyticum (strain ATCC 35319 / DSM 5812 / JCM 6584 / H10) (Clostridium cellulolyticum).